The sequence spans 115 residues: Large ribosomal subunit protein bL19 (115 aa).

The protein belongs to the bacterial ribosomal protein bL19 family.

In terms of biological role, this protein is located at the 30S-50S ribosomal subunit interface and may play a role in the structure and function of the aminoacyl-tRNA binding site. This is Large ribosomal subunit protein bL19 from Shouchella clausii (strain KSM-K16) (Alkalihalobacillus clausii).